Consider the following 94-residue polypeptide: uncharacterized protein (94 aa).

This is an uncharacterized protein from Haemophilus influenzae (strain ATCC 51907 / DSM 11121 / KW20 / Rd).